Reading from the N-terminus, the 317-residue chain is MTKLLVAKVLCMVGVFFFMLLGSLLPVKVIEADLEKAHRSKKVLSLCNTFGGGVFLATCFNALLPAVRDKLQQVLSLGHISTDYPLAETLMMVGFFLTVFVEQLVLTFRRERPPFIDLETFNAGSDAGSDSEYESPFVGVGNRSHSLYPEPTAHTHGAGLRLRELGRPGPLRLLSLVFALSAHSVFEGLALGLQEEGERVVSLFVGVAIHETLVAVALGISMARSAVPLRDAAKLAVTVSAMIPVGIGLGLGIESARSVASSVASALLQGLAGGTFLFVTFLEILAKELEERSEQLLKVLFLVLGYAVLAGMVFLKW.

Topologically, residues Met-1–Lys-3 are extracellular. A helical transmembrane segment spans residues Leu-4 to Leu-24. Residues Leu-25 to Lys-42 are Cytoplasmic-facing. A helical membrane pass occupies residues Val-43–Leu-63. The Extracellular portion of the chain corresponds to Leu-64 to Pro-85. A helical transmembrane segment spans residues Leu-86 to Leu-106. Residues Thr-107–Arg-172 lie on the Cytoplasmic side of the membrane. Residues Ser-125 and Ser-129 each carry the phosphoserine modification. The chain crosses the membrane as a helical span at residues Leu-173–Leu-193. The Extracellular portion of the chain corresponds to Gln-194–Arg-199. Residues Val-200 to Ile-220 traverse the membrane as a helical segment. The Cytoplasmic segment spans residues Ser-221–Ala-232. A helical membrane pass occupies residues Ala-233–Ile-253. The Extracellular segment spans residues Glu-254 to Ser-265. Residues Ala-266–Ala-286 traverse the membrane as a helical segment. Over Lys-287–Glu-294 the chain is Cytoplasmic. A helical transmembrane segment spans residues Gln-295–Leu-315. The Extracellular portion of the chain corresponds to Lys-316–Trp-317.

Belongs to the ZIP transporter (TC 2.A.5) family. As to expression, highly expressed in the testes. Highly expressed in dentate gyrus granule cells of the hippocampus. Expressed in the mammary gland.

Its subcellular location is the cell membrane. It localises to the apical cell membrane. It carries out the reaction Zn(2+)(in) = Zn(2+)(out). Its function is as follows. Transporter for the divalent cation Zn(2+). Mediates the influx of Zn(2+) into cells from extracellular space. Controls Zn(2+) accumulation into dentate gyrus granule cells in the hippocampus. Mediates Zn(2+) reuptake from the secreted milk within the alveolar lumen. This is Zinc transporter ZIP3 (Slc39a3) from Mus musculus (Mouse).